The primary structure comprises 661 residues: MFDKQKNRYIRVELASPDQIRNWAERTLPNGEIVGKVTKPYTLHYNSHKPEKDGLFCERIFGPIKSGICACGKYHGFVKNLPEVKFCKQCGVEFTDSKVRRYRMGYIQLAYPATHIWYLKRLPSHIATLLKMSLKEVESLVYCDLFLPRPIIKKPNLLKVKKLFNYDDQLWKETLPRFFSTRSFESFQNREMATGGDAIHKRLSSLNLQKLIFQSYNEWEKLSLQRSTGNSYEDKKIQRMKDIIIRRIKLAKQFFENNIKPEWMVLSVLPVLPPELRPMIEINQGELITSDLNELYRRVIYRNNTLIGFLNKSNSTPAGLIIYQKRLVQEAVDALIDNRIGNQIMKDRNNRPYKSFSEIIEGKEGRFRQDLLGKRVDYSGRSVIVVGPSLSLHQCGIPKDMAIELFQPFIIRDLINCQLAPNLRAARSMIQNQEPIIFKILEKIIKNHPILLNRAPTLHRLGIQAFQPILVEGLAIRLHPLVCGGFNADFDGDQMAVHIPLSLEAQAEARFLMLANSNLLSPANGEPITVPSQDMLLGLYVLTMSCKQGIYIYNEQKLKKKIPYFCNYIDVITAYEKKQINLHDPIWLKWYGNLRGTSSTKKQKLFEIQCESRGTRRKIFENWHFCENIRNRKFTIYLFTTPGRIIFNQLLEQSIQATVRI.

Positions 69, 71, 87, and 90 each coordinate Zn(2+). Mg(2+) is bound by residues Asp489, Asp491, and Asp493.

The protein belongs to the RNA polymerase beta' chain family. RpoC1 subfamily. In plastids the minimal PEP RNA polymerase catalytic core is composed of four subunits: alpha, beta, beta', and beta''. When a (nuclear-encoded) sigma factor is associated with the core the holoenzyme is formed, which can initiate transcription. It depends on Mg(2+) as a cofactor. The cofactor is Zn(2+).

It is found in the plastid. It localises to the chloroplast. It carries out the reaction RNA(n) + a ribonucleoside 5'-triphosphate = RNA(n+1) + diphosphate. Functionally, DNA-dependent RNA polymerase catalyzes the transcription of DNA into RNA using the four ribonucleoside triphosphates as substrates. The sequence is that of DNA-directed RNA polymerase subunit beta' from Chaetosphaeridium globosum (Charophycean green alga).